The sequence spans 106 residues: UPF0145 protein Nmul_A0734 (106 aa).

This sequence belongs to the UPF0145 family.

The polypeptide is UPF0145 protein Nmul_A0734 (Nitrosospira multiformis (strain ATCC 25196 / NCIMB 11849 / C 71)).